A 477-amino-acid polypeptide reads, in one-letter code: Glycogen synthase (477 aa).

Lysine 15 lines the ADP-alpha-D-glucose pocket.

The protein belongs to the glycosyltransferase 1 family. Bacterial/plant glycogen synthase subfamily.

The catalysed reaction is [(1-&gt;4)-alpha-D-glucosyl](n) + ADP-alpha-D-glucose = [(1-&gt;4)-alpha-D-glucosyl](n+1) + ADP + H(+). Its pathway is glycan biosynthesis; glycogen biosynthesis. Its function is as follows. Synthesizes alpha-1,4-glucan chains using ADP-glucose. The protein is Glycogen synthase of Salmonella typhi.